Consider the following 214-residue polypeptide: Large ribosomal subunit protein uL3 (214 aa).

A disordered region spans residues 119-159 (GVKRHGFAGGPKTHGQSDRHRAPGSIGPTTDPGRVHKGKRM).

Belongs to the universal ribosomal protein uL3 family. Part of the 50S ribosomal subunit. Forms a cluster with proteins L14 and L19.

One of the primary rRNA binding proteins, it binds directly near the 3'-end of the 23S rRNA, where it nucleates assembly of the 50S subunit. The chain is Large ribosomal subunit protein uL3 from Thermomicrobium roseum (strain ATCC 27502 / DSM 5159 / P-2).